The following is a 131-amino-acid chain: Transcription antitermination protein NusB (131 aa).

This sequence belongs to the NusB family.

Involved in transcription antitermination. Required for transcription of ribosomal RNA (rRNA) genes. Binds specifically to the boxA antiterminator sequence of the ribosomal RNA (rrn) operons. This chain is Transcription antitermination protein NusB, found in Campylobacter concisus (strain 13826).